Consider the following 452-residue polypeptide: Methionine aminopeptidase 2-1 (452 aa).

The tract at residues 1–100 is disordered; that stretch reads MAAKVADDVA…VRIDEVFPND (100 aa). The segment covering 37–51 has biased composition (acidic residues); sequence EHDDSDDDNEAEDGA. A compositionally biased stretch (basic residues) spans 60–73; it reads KKKKKRKPRKKKKA. Residue histidine 205 participates in substrate binding. Positions 225, 236, and 305 each coordinate a divalent metal cation. Histidine 313 serves as a coordination point for substrate. A divalent metal cation contacts are provided by glutamate 338 and glutamate 433.

Belongs to the peptidase M24A family. Methionine aminopeptidase eukaryotic type 2 subfamily. Co(2+) is required as a cofactor. The cofactor is Zn(2+). Mn(2+) serves as cofactor. Requires Fe(2+) as cofactor.

It localises to the cytoplasm. It carries out the reaction Release of N-terminal amino acids, preferentially methionine, from peptides and arylamides.. Its function is as follows. Cotranslationally removes the N-terminal methionine from nascent proteins. The N-terminal methionine is often cleaved when the second residue in the primary sequence is small and uncharged (Met-Ala-, Cys, Gly, Pro, Ser, Thr, or Val). In Pyrenophora teres f. teres (strain 0-1) (Barley net blotch fungus), this protein is Methionine aminopeptidase 2-1.